Here is a 474-residue protein sequence, read N- to C-terminus: 3-isopropylmalate dehydratase large subunit (474 aa).

Positions 355, 415, and 418 each coordinate [4Fe-4S] cluster.

It belongs to the aconitase/IPM isomerase family. LeuC type 1 subfamily. In terms of assembly, heterodimer of LeuC and LeuD. The cofactor is [4Fe-4S] cluster.

The enzyme catalyses (2R,3S)-3-isopropylmalate = (2S)-2-isopropylmalate. It participates in amino-acid biosynthesis; L-leucine biosynthesis; L-leucine from 3-methyl-2-oxobutanoate: step 2/4. Catalyzes the isomerization between 2-isopropylmalate and 3-isopropylmalate, via the formation of 2-isopropylmaleate. This chain is 3-isopropylmalate dehydratase large subunit, found in Shewanella sp. (strain ANA-3).